A 196-amino-acid polypeptide reads, in one-letter code: Proteasome subunit beta 1 (196 aa).

A propeptide spans 1–6 (MEKKTG) (removed in mature form; by autocatalysis). T7 functions as the Nucleophile in the catalytic mechanism.

Belongs to the peptidase T1B family. In terms of assembly, the 20S proteasome core is composed of 14 alpha and 14 beta subunits that assemble into four stacked heptameric rings, resulting in a barrel-shaped structure. The two inner rings, each composed of seven catalytic beta subunits, are sandwiched by two outer rings, each composed of seven alpha subunits. The catalytic chamber with the active sites is on the inside of the barrel. Has a gated structure, the ends of the cylinder being occluded by the N-termini of the alpha-subunits. Is capped at one or both ends by the proteasome regulatory ATPase, PAN.

Its subcellular location is the cytoplasm. It carries out the reaction Cleavage of peptide bonds with very broad specificity.. The formation of the proteasomal ATPase PAN-20S proteasome complex, via the docking of the C-termini of PAN into the intersubunit pockets in the alpha-rings, triggers opening of the gate for substrate entry. Interconversion between the open-gate and close-gate conformations leads to a dynamic regulation of the 20S proteasome proteolysis activity. Its function is as follows. Component of the proteasome core, a large protease complex with broad specificity involved in protein degradation. The sequence is that of Proteasome subunit beta 1 from Pyrococcus furiosus (strain ATCC 43587 / DSM 3638 / JCM 8422 / Vc1).